The chain runs to 209 residues: Tumor suppressor candidate gene 1 protein (209 aa).

3 disordered regions span residues 1–55 (MWRM…DGAR), 111–157 (ALRL…LRAR), and 172–209 (LHLE…GPWL). Residues 14 to 47 (CCGGDGAADGRGPGRSGRARGGGSPSGGGGGVGW) show a composition bias toward gly residues. A coiled-coil region spans residues 70 to 114 (LEAIRARDEWDRQNARLRQENARLRLENRRLKRENRSLFRQALRL). Basic and acidic residues predominate over residues 125 to 149 (EARRVPEEASTNRRARDSGREDEPG). A Phosphoserine modification is found at S150. Residues 152–177 (RALRARLEKLEAMYRRALLQLHLEQR) adopt a coiled-coil conformation. The span at 174–188 (LEQRGPRPSGDKEEQ) shows a compositional bias: basic and acidic residues.

As to expression, widely expressed at low level. Expressed at higher level in testis, weakly expressed in muscle, colon, lung and spleen. Not detected in 3 non small cell lung carcinoma (NSCLC) cell lines with homozygous deletion of the 9p region, while it is down-regulated in 3 other tumor cell lines.

In Homo sapiens (Human), this protein is Tumor suppressor candidate gene 1 protein (TUSC1).